The following is a 196-amino-acid chain: Probable malonic semialdehyde reductase RutE (196 aa).

The protein belongs to the nitroreductase family. HadB/RutE subfamily. FMN serves as cofactor.

It carries out the reaction 3-hydroxypropanoate + NADP(+) = 3-oxopropanoate + NADPH + H(+). May reduce toxic product malonic semialdehyde to 3-hydroxypropionic acid, which is excreted. This is Probable malonic semialdehyde reductase RutE from Escherichia coli (strain K12 / MC4100 / BW2952).